Here is a 158-residue protein sequence, read N- to C-terminus: Transcription factor BTF3 homolog 4 (158 aa).

The region spanning 33-98 (TADDKKLQSS…AEAKPITEML (66 aa)) is the NAC-A/B domain. Residues 124–158 (VLDSKAPKSEDIDEEDDDVPDLAENFDEASKNEAN) are disordered. A compositionally biased stretch (acidic residues) spans 134–150 (DIDEEDDDVPDLAENFD).

This sequence belongs to the NAC-beta family.

This is Transcription factor BTF3 homolog 4 (BTF3L4) from Gallus gallus (Chicken).